Here is a 1097-residue protein sequence, read N- to C-terminus: MSSSALQIAKTATYLPDLVEVQRASFKWFLEKGLIEELKSFSPITDYTGKLELHFVGEEYRLKRPRHDVEEAKRRDATFASQMYVTCRLINKETGEIKEQEVFIGELPLMTERGTFIINGAERVIVNQIVRSPGVYFKDEMDKNGRRTYNASVIPNRGAWLKFETDKNNLLYVRVDKTRKINAHVLMRAMGLSDNDVVDKLRHPEFYKQSIDSANDEGINSEDQALLELYKKLRPGEPPSVSGGQQLLHSRFFDPKRYDLGRVGRYKINKKLRLTVPNEVRTLTHEDVLSTIDYLINLELDIGGASLDDIDHLGNRRVRSVGELLQNQVRVGLNRLERIIKERMTVGETDSLTPAQLVNPKPLVAAIKEFFGSSQLSQFMDQTNPLAELTHKRRISALGPGGLTRERAGFAVRDIHPSHYGRLCPIETPEGPNAGLINSLATHARVNEYGFIETPFWEVEKGRVMKEGNPVYLSADLEDECRVAPGDVATDKSGNILADLIPVRYRQDFEKVPPHQVDYVQLSPVQVISVATSLIPFLEHDDANRALMGSNMQRQAVPLLRPERPLVGTGLESQVARDSGMVPITKVNGIVSYVDANEIVVKDVDGNEHVHFLQKYQRSNQDTCLNQRPIVKNGDQVISGQVLADGSACEGGEIALGQNVLIAYMPWEGYNYEDAILVSERMVTDDLYTSVHIEKYEIEARQTKLGPEEITREIPNISEESLNNLDEMGIIRTGAFVESGDILVGKVTPKGESDQPPEEKLLRAIFGEKARDVRDNSLRVPKTEKGRVLDVRIYTREQGDELPPGANMVVRVYVAQRRKIQVGDKMAGRHGNKGIISRILPREDMPYLPDGTPVDIVLNPLGVPSRMNVGQVFELLMGWAASNLNCRVKVVPFDEMYGAEKSHQTVQAFLEEASKQDGKDWVYNPKDPGKLLLKDGRTGEPFDQPVAVGYSHFLKLVHLVDDKIHARSTGPYSLVTQQPLGGKAQQGGQRLGEMEVWALEAYGAAYTLQELLTVKSDDMQGRNEALNAIVKGKPIPRPGTPESFKVLMRELQSLGLDIGVYTDEGKEVDLMQDVNPKRNTPSRPTYESLGTSEYAED.

The interval 1071 to 1097 (MQDVNPKRNTPSRPTYESLGTSEYAED) is disordered. A compositionally biased stretch (polar residues) spans 1077 to 1091 (KRNTPSRPTYESLGT).

It belongs to the RNA polymerase beta chain family. As to quaternary structure, in cyanobacteria the RNAP catalytic core is composed of 2 alpha, 1 beta, 1 beta', 1 gamma and 1 omega subunit. When a sigma factor is associated with the core the holoenzyme is formed, which can initiate transcription.

The catalysed reaction is RNA(n) + a ribonucleoside 5'-triphosphate = RNA(n+1) + diphosphate. In terms of biological role, DNA-dependent RNA polymerase catalyzes the transcription of DNA into RNA using the four ribonucleoside triphosphates as substrates. In Prochlorococcus marinus subsp. pastoris (strain CCMP1986 / NIES-2087 / MED4), this protein is DNA-directed RNA polymerase subunit beta.